Consider the following 897-residue polypeptide: Serine/threonine-protein kinase ATG1 (897 aa).

Residues 24-325 form the Protein kinase domain; sequence YTAEKEIGKG…FEEFFANKVV (302 aa). Residues 30 to 38 and Lys54 each bind ATP; that span reads IGKGSFATV. Ser34 is subject to Phosphoserine. Phosphothreonine is present on Thr129. Residue Asp172 is the Proton acceptor of the active site. Thr226 carries the phosphothreonine; by autocatalysis modification. Phosphoserine occurs at positions 304, 365, and 390. The LIR motif lies at 429–432; the sequence is YVVV. The segment at 490–509 is disordered; that stretch reads LLRATSSSSGGSDGSRRPSL. 2 positions are modified to phosphoserine; by PKA: Ser508 and Ser515. Ser533, Ser551, and Ser552 each carry phosphoserine. The residue at position 590 (Thr590) is a Phosphothreonine. 9 positions are modified to phosphoserine: Ser621, Ser635, Ser638, Ser647, Ser677, Ser680, Ser683, Ser769, and Ser783. Residues 880-886 are required for Cvt trafficking; it reads DSIANRL.

Belongs to the protein kinase superfamily. Ser/Thr protein kinase family. APG1/unc-51/ULK1 subfamily. Homodimer. Dimerization requires the presence of ATG13. Forms a ternary complex with ATG13 and ATG17. Also interacts with ATG11. In terms of processing, autophosphorylated at Thr-226 and Ser-390. The phosphorylation state may play a role in the induction of protein degradation upon starvation. Phosphorylation at Thr-226 within the activation loop is required for protein kinase activity whereas phosphorylation at Ser-34 leads to inhibition of kinase activity. Phosphorylation of Ser-508 and Ser-515 by PKA is required to induce autophagy but not for kinase activity.

It is found in the cytoplasm. Its subcellular location is the preautophagosomal structure membrane. The catalysed reaction is L-seryl-[protein] + ATP = O-phospho-L-seryl-[protein] + ADP + H(+). The enzyme catalyses L-threonyl-[protein] + ATP = O-phospho-L-threonyl-[protein] + ADP + H(+). With respect to regulation, activated by hypophosphorylated form of ATG13 (present in nitrogen starvation conditions). Also activated by autophopsphorylation of Thr-226 and inhibited by phosphorylation of Ser-34. Its function is as follows. Serine/threonine protein kinase involved in the cytoplasm to vacuole transport (Cvt) and found to be essential in autophagy, where it is required for the formation of autophagosomes. Involved in the clearance of protein aggregates which cannot be efficiently cleared by the proteasome. Required for selective autophagic degradation of the nucleus (nucleophagy) as well as for mitophagy which contributes to regulate mitochondrial quantity and quality by eliminating the mitochondria to a basal level to fulfill cellular energy requirements and preventing excess ROS production. Also involved in endoplasmic reticulum-specific autophagic process, in selective removal of ER-associated degradation (ERAD) substrates. Plays a key role in ATG9 and ATG23 cycling through the pre-autophagosomal structure and is necessary to promote ATG18 binding to ATG9 through phosphorylation of ATG9. Catalyzes phosphorylation of ATG4, decreasing the interaction between ATG4 and ATG8 and impairing deconjugation of PE-conjugated forms of ATG8. Finally, ATG1 is also required for the maintenance of cell viability under starvation and for glycogen storage during stationary phase. Plays a role in genome stability through suppression of abnormal mitosis under starvation, and in regulation of filamentous growth. This is Serine/threonine-protein kinase ATG1 from Saccharomyces cerevisiae (strain YJM789) (Baker's yeast).